Here is a 228-residue protein sequence, read N- to C-terminus: Orotidine 5'-phosphate decarboxylase (228 aa).

Substrate contacts are provided by residues Asp10, Lys33, 60-69 (DLKLYDIPHT), Thr116, Arg178, Gln187, Gly207, and Arg208. Residue Lys62 is the Proton donor of the active site.

Belongs to the OMP decarboxylase family. Type 1 subfamily. As to quaternary structure, homodimer.

The enzyme catalyses orotidine 5'-phosphate + H(+) = UMP + CO2. Its pathway is pyrimidine metabolism; UMP biosynthesis via de novo pathway; UMP from orotate: step 2/2. Its function is as follows. Catalyzes the decarboxylation of orotidine 5'-monophosphate (OMP) to uridine 5'-monophosphate (UMP). The protein is Orotidine 5'-phosphate decarboxylase of Oenococcus oeni (strain ATCC BAA-331 / PSU-1).